The following is a 94-amino-acid chain: Selenoprotein K (94 aa).

A helical membrane pass occupies residues 20-42 (LSFLTDFFWGAVEFIGLFFQTLV). The segment at 48–94 (KDGNNSASSRFSDGRGPPGFPGRRRMGRINHGAGPTPPPMGGGGUGR) is disordered. Positions 49–58 (DGNNSASSRF) are enriched in polar residues. Position 92 (selenocysteine 92) is a non-standard amino acid, selenocysteine.

This sequence belongs to the selenoprotein K family.

It localises to the endoplasmic reticulum membrane. The protein localises to the cell membrane. Required for Ca(2+) flux in immune cells and plays a role in T-cell proliferation and in T-cell and neutrophil migration. Involved in endoplasmic reticulum-associated degradation (ERAD) of soluble glycosylated proteins. Required for cell surface expression of CD36 and involved in macrophage uptake of low-density lipoprotein and in foam cell formation. Required for palmitoylation. This Danio rerio (Zebrafish) protein is Selenoprotein K (selenok).